A 353-amino-acid chain; its full sequence is Bone morphogenetic protein 2 (353 aa).

Positions 1–239 (GSLKRPEDLL…GHPLHKREKR (239 aa)) are excised as a propeptide. Asparagine 91, asparagine 121, and asparagine 157 each carry an N-linked (GlcNAc...) asparagine glycan. The segment at 228–248 (GKGHPLHKREKRQAKHKQRKR) is disordered. A compositionally biased stretch (basic residues) spans 231 to 248 (HPLHKREKRQAKHKQRKR). Intrachain disulfides connect cysteine 253/cysteine 318, cysteine 282/cysteine 350, and cysteine 286/cysteine 352. Residue asparagine 295 is glycosylated (N-linked (GlcNAc...) asparagine).

This sequence belongs to the TGF-beta family. Homodimer; disulfide-linked.

Its subcellular location is the secreted. Functionally, negatively regulates the structure and function of the limb apical ectodermal ridge. This chain is Bone morphogenetic protein 2 (BMP2), found in Gallus gallus (Chicken).